The chain runs to 368 residues: tRNA-specific 2-thiouridylase MnmA (368 aa).

ATP-binding positions include 12-19 (GMSGGVDS) and Met-38. Residues 98–100 (NPD) are interaction with target base in tRNA. Catalysis depends on Cys-103, which acts as the Nucleophile. Cys-103 and Cys-200 are disulfide-bonded. Residue Gly-128 coordinates ATP. The segment at 150 to 152 (KDQ) is interaction with tRNA. Cys-200 acts as the Cysteine persulfide intermediate in catalysis. Residues 311–312 (RY) form an interaction with tRNA region.

The protein belongs to the MnmA/TRMU family.

The protein localises to the cytoplasm. The catalysed reaction is S-sulfanyl-L-cysteinyl-[protein] + uridine(34) in tRNA + AH2 + ATP = 2-thiouridine(34) in tRNA + L-cysteinyl-[protein] + A + AMP + diphosphate + H(+). Functionally, catalyzes the 2-thiolation of uridine at the wobble position (U34) of tRNA, leading to the formation of s(2)U34. The chain is tRNA-specific 2-thiouridylase MnmA from Aeromonas hydrophila subsp. hydrophila (strain ATCC 7966 / DSM 30187 / BCRC 13018 / CCUG 14551 / JCM 1027 / KCTC 2358 / NCIMB 9240 / NCTC 8049).